We begin with the raw amino-acid sequence, 799 residues long: Phenylalanine--tRNA ligase beta subunit (799 aa).

One can recognise a tRNA-binding domain in the interval Gly-39 to Asn-150. A B5 domain is found at Phe-402–Arg-478. Residues Asp-456, Asp-462, Glu-465, and Glu-466 each contribute to the Mg(2+) site. The 94-residue stretch at Ala-705–Lys-798 folds into the FDX-ACB domain.

Belongs to the phenylalanyl-tRNA synthetase beta subunit family. Type 1 subfamily. As to quaternary structure, tetramer of two alpha and two beta subunits. Requires Mg(2+) as cofactor.

The protein resides in the cytoplasm. The catalysed reaction is tRNA(Phe) + L-phenylalanine + ATP = L-phenylalanyl-tRNA(Phe) + AMP + diphosphate + H(+). The polypeptide is Phenylalanine--tRNA ligase beta subunit (Protochlamydia amoebophila (strain UWE25)).